A 341-amino-acid polypeptide reads, in one-letter code: 4-amino-5-hydroxymethyl-2-methylpyrimidine phosphate synthase (341 aa).

Lys-62 is modified (N6-(pyridoxal phosphate)lysine). His-66 is a catalytic residue. Position 115 to 118 (Gly-115 to Gly-118) interacts with pyridoxal 5'-phosphate. A CCCFC; essential for catalytic activity, may be the site of iron coordination motif is present at residues Cys-195–Cys-199.

The protein belongs to the NMT1/THI5 family. Homodimer. Fe cation serves as cofactor.

The enzyme catalyses N(6)-(pyridoxal phosphate)-L-lysyl-[4-amino-5-hydroxymethyl-2-methylpyrimidine phosphate synthase] + L-histidyl-[4-amino-5-hydroxymethyl-2-methylpyrimidine phosphate synthase] + 2 Fe(3+) + 4 H2O = L-lysyl-[4-amino-5-hydroxymethyl-2-methylpyrimidine phosphate synthase] + (2S)-2-amino-5-hydroxy-4-oxopentanoyl-[4-amino-5-hydroxymethyl-2-methylpyrimidine phosphate synthase] + 4-amino-2-methyl-5-(phosphooxymethyl)pyrimidine + 3-oxopropanoate + 2 Fe(2+) + 2 H(+). The protein operates within cofactor biosynthesis; thiamine diphosphate biosynthesis. In terms of biological role, responsible for the formation of the pyrimidine heterocycle in the thiamine biosynthesis pathway. Catalyzes the formation of hydroxymethylpyrimidine phosphate (HMP-P) from histidine and pyridoxal phosphate (PLP). The protein uses PLP and the active site histidine to form HMP-P, generating an inactive enzyme. The enzyme can only undergo a single turnover, which suggests it is a suicide enzyme. This is 4-amino-5-hydroxymethyl-2-methylpyrimidine phosphate synthase from Uromyces fabae (Rust fungus).